A 299-amino-acid polypeptide reads, in one-letter code: tRNA dimethylallyltransferase (299 aa).

Position 11-18 (11-18 (GPTAVGKT)) interacts with ATP. Position 13-18 (13-18 (TAVGKT)) interacts with substrate. Residues 36-39 (DSQQ) are interaction with substrate tRNA.

Belongs to the IPP transferase family. Monomer. Mg(2+) serves as cofactor.

The enzyme catalyses adenosine(37) in tRNA + dimethylallyl diphosphate = N(6)-dimethylallyladenosine(37) in tRNA + diphosphate. Its function is as follows. Catalyzes the transfer of a dimethylallyl group onto the adenine at position 37 in tRNAs that read codons beginning with uridine, leading to the formation of N6-(dimethylallyl)adenosine (i(6)A). The chain is tRNA dimethylallyltransferase from Streptococcus pyogenes serotype M28 (strain MGAS6180).